Consider the following 263-residue polypeptide: Aminoglycoside 3'-phosphotransferase (263 aa).

Catalysis depends on Asp-189, which acts as the Proton acceptor.

The protein belongs to the aminoglycoside phosphotransferase family.

The catalysed reaction is kanamycin A + ATP = kanamycin 3'-phosphate + ADP + H(+). Its function is as follows. Resistance to kanamycin and structurally-related aminoglycosides, including amikacin. The chain is Aminoglycoside 3'-phosphotransferase (aphA) from Staphylococcus aureus.